Reading from the N-terminus, the 426-residue chain is Glutamate-1-semialdehyde 2,1-aminomutase (426 aa).

K265 is modified (N6-(pyridoxal phosphate)lysine).

The protein belongs to the class-III pyridoxal-phosphate-dependent aminotransferase family. HemL subfamily. As to quaternary structure, homodimer. Requires pyridoxal 5'-phosphate as cofactor.

The protein resides in the cytoplasm. It catalyses the reaction (S)-4-amino-5-oxopentanoate = 5-aminolevulinate. The protein operates within porphyrin-containing compound metabolism; protoporphyrin-IX biosynthesis; 5-aminolevulinate from L-glutamyl-tRNA(Glu): step 2/2. In Escherichia fergusonii (strain ATCC 35469 / DSM 13698 / CCUG 18766 / IAM 14443 / JCM 21226 / LMG 7866 / NBRC 102419 / NCTC 12128 / CDC 0568-73), this protein is Glutamate-1-semialdehyde 2,1-aminomutase.